The chain runs to 451 residues: CDP-diacylglycerol--serine O-phosphatidyltransferase PssA (451 aa).

PLD phosphodiesterase domains are found at residues 27-224 (VDFF…ELRD) and 239-451 (SVTP…SRIL). A CDP-1,2-diacyl-sn-glycerol contacts are provided by L56, Y57, R91, R94, R96, I97, E132, A133, V136, H138, K140, G152, Y159, and R167. H138 is an active-site residue. The active site involves D169. 8 residues coordinate a CDP-1,2-diacyl-sn-glycerol: Y273, D305, F306, I316, I317, L320, L323, and Y324. H357 is a catalytic residue. A CDP-1,2-diacyl-sn-glycerol is bound by residues K359, N374, and R378. Residue E385 is part of the active site. A CDP-1,2-diacyl-sn-glycerol is bound by residues L438, I447, I450, and L451.

This sequence belongs to the CDP-alcohol phosphatidyltransferase class-II family. In terms of assembly, multimeric. Interacts with ACP, YbgC and PlsB, forming altogether a complex at the inner membrane. Monomeric and dimeric; existing in equilibrium, but the monomer probably exhibits preferential membrane association.

It is found in the cytoplasm. It localises to the cell inner membrane. The catalysed reaction is a CDP-1,2-diacyl-sn-glycerol + L-serine = a 1,2-diacyl-sn-glycero-3-phospho-L-serine + CMP + H(+). It functions in the pathway phospholipid metabolism; phosphatidylethanolamine biosynthesis; phosphatidylethanolamine from CDP-diacylglycerol: step 1/2. Functionally, catalyzes the conversion of cytidine diphosphate diacylglycerol (CDP-DG) and L-serine into phosphatidylserine. Essential for biosynthesis of phosphatidylethanolamine, one of the major membrane phospholipids. Phosphatidylserine is later converted into phosphatidylethanolamine via the action of phosphatidylserine decarboxylase psd. Associates with the bacterial membrane for its role, which depends on the levels of anionic phospholipids in the membrane. The protein is CDP-diacylglycerol--serine O-phosphatidyltransferase PssA (pssA) of Escherichia coli (strain K12).